A 258-amino-acid polypeptide reads, in one-letter code: Ubiquinone/menaquinone biosynthesis C-methyltransferase UbiE (258 aa).

S-adenosyl-L-methionine is bound by residues Thr-81, Asp-102, and 130 to 131 (NA).

This sequence belongs to the class I-like SAM-binding methyltransferase superfamily. MenG/UbiE family.

It carries out the reaction a 2-demethylmenaquinol + S-adenosyl-L-methionine = a menaquinol + S-adenosyl-L-homocysteine + H(+). The catalysed reaction is a 2-methoxy-6-(all-trans-polyprenyl)benzene-1,4-diol + S-adenosyl-L-methionine = a 5-methoxy-2-methyl-3-(all-trans-polyprenyl)benzene-1,4-diol + S-adenosyl-L-homocysteine + H(+). It functions in the pathway quinol/quinone metabolism; menaquinone biosynthesis; menaquinol from 1,4-dihydroxy-2-naphthoate: step 2/2. It participates in cofactor biosynthesis; ubiquinone biosynthesis. Functionally, methyltransferase required for the conversion of demethylmenaquinol (DMKH2) to menaquinol (MKH2) and the conversion of 2-polyprenyl-6-methoxy-1,4-benzoquinol (DDMQH2) to 2-polyprenyl-3-methyl-6-methoxy-1,4-benzoquinol (DMQH2). The chain is Ubiquinone/menaquinone biosynthesis C-methyltransferase UbiE from Allorhizobium ampelinum (strain ATCC BAA-846 / DSM 112012 / S4) (Agrobacterium vitis (strain S4)).